The sequence spans 373 residues: Transaldolase (373 aa).

The active-site Schiff-base intermediate with substrate is lysine 143.

Belongs to the transaldolase family. Type 2 subfamily.

It localises to the cytoplasm. It carries out the reaction D-sedoheptulose 7-phosphate + D-glyceraldehyde 3-phosphate = D-erythrose 4-phosphate + beta-D-fructose 6-phosphate. The protein operates within carbohydrate degradation; pentose phosphate pathway; D-glyceraldehyde 3-phosphate and beta-D-fructose 6-phosphate from D-ribose 5-phosphate and D-xylulose 5-phosphate (non-oxidative stage): step 2/3. Its function is as follows. Transaldolase is important for the balance of metabolites in the pentose-phosphate pathway. The chain is Transaldolase from Mycobacterium ulcerans (strain Agy99).